The chain runs to 482 residues: MKFIIKLFPEITIKSQSVRLRFIKILAGNIRNVLKHYDETLAVVRHWDNIEVRAKDENQRLAIRDALTRIPGIHHILEVEDVPFTDMHDIFEKALAQYREQLEGKTFCVRVKRRGKHEFSSIEVERYVGGGLNQHIESARVKLANPDVTVHLEVEDDRLLLIKGRYEGIGGFPIGTQEDVLSLISGGFDSGVSSYMLMRRGCRVHYCFFNLGGAAHEIGVRQVAHYLWNRFGSSHRVRFVAINFEPVVGEILEKVDDGQMGVVLKRMMVRAASKVAERYGVQALVTGEALGQVSSQTLTNLRLIDNVSDTLILRPLISYDKEHIINLARQIGTEDFARTMPEYCGVISKSPTVKAIKAKIEAEEENFDFSILDKVVEEANNVDIREIAQQTQQEVVEVETVSGFGANDVILDIRSIDEQDDKPLKVEGIDVVSLPFYKLSTKFGDLDQSKTWLLWCERGVMSRLQALYLREQGFANVKVYRP.

Residues 61–165 enclose the THUMP domain; that stretch reads LAIRDALTRI…DDRLLLIKGR (105 aa). ATP is bound by residues 183-184, lysine 265, glycine 287, and glutamine 296; that span reads LI. Cysteine 344 and cysteine 456 are joined by a disulfide. Residues 404–482 enclose the Rhodanese domain; sequence FGANDVILDI…GFANVKVYRP (79 aa). The active-site Cysteine persulfide intermediate is the cysteine 456.

This sequence belongs to the ThiI family.

It is found in the cytoplasm. The enzyme catalyses [ThiI sulfur-carrier protein]-S-sulfanyl-L-cysteine + a uridine in tRNA + 2 reduced [2Fe-2S]-[ferredoxin] + ATP + H(+) = [ThiI sulfur-carrier protein]-L-cysteine + a 4-thiouridine in tRNA + 2 oxidized [2Fe-2S]-[ferredoxin] + AMP + diphosphate. It carries out the reaction [ThiS sulfur-carrier protein]-C-terminal Gly-Gly-AMP + S-sulfanyl-L-cysteinyl-[cysteine desulfurase] + AH2 = [ThiS sulfur-carrier protein]-C-terminal-Gly-aminoethanethioate + L-cysteinyl-[cysteine desulfurase] + A + AMP + 2 H(+). It participates in cofactor biosynthesis; thiamine diphosphate biosynthesis. Catalyzes the ATP-dependent transfer of a sulfur to tRNA to produce 4-thiouridine in position 8 of tRNAs, which functions as a near-UV photosensor. Also catalyzes the transfer of sulfur to the sulfur carrier protein ThiS, forming ThiS-thiocarboxylate. This is a step in the synthesis of thiazole, in the thiamine biosynthesis pathway. The sulfur is donated as persulfide by IscS. This chain is tRNA sulfurtransferase, found in Salmonella arizonae (strain ATCC BAA-731 / CDC346-86 / RSK2980).